Reading from the N-terminus, the 406-residue chain is L-cysteine:1D-myo-inositol 2-amino-2-deoxy-alpha-D-glucopyranoside ligase (406 aa).

Cys-45 contributes to the Zn(2+) binding site. Residues 45-48 (CGIT), Thr-60, and 83-85 (NIT) each bind L-cysteinyl-5'-AMP. The 'HIGH' region signature appears at 47-57 (ITPYDATHMGH). A 'ERGGDP' region motif is present at residues 185-190 (ERGGDP). Residue Trp-225 coordinates L-cysteinyl-5'-AMP. Cys-229 contacts Zn(2+). 247-249 (GSD) provides a ligand contact to L-cysteinyl-5'-AMP. His-254 provides a ligand contact to Zn(2+). An L-cysteinyl-5'-AMP-binding site is contributed by Val-281. Residues 287-291 (KMSKS) carry the 'KMSKS' region motif.

Belongs to the class-I aminoacyl-tRNA synthetase family. MshC subfamily. Monomer. It depends on Zn(2+) as a cofactor.

The catalysed reaction is 1D-myo-inositol 2-amino-2-deoxy-alpha-D-glucopyranoside + L-cysteine + ATP = 1D-myo-inositol 2-(L-cysteinylamino)-2-deoxy-alpha-D-glucopyranoside + AMP + diphosphate + H(+). Catalyzes the ATP-dependent condensation of GlcN-Ins and L-cysteine to form L-Cys-GlcN-Ins. The chain is L-cysteine:1D-myo-inositol 2-amino-2-deoxy-alpha-D-glucopyranoside ligase from Kribbella flavida (strain DSM 17836 / JCM 10339 / NBRC 14399).